The chain runs to 62 residues: Photosystem II reaction center protein Z (62 aa).

2 helical membrane passes run 8-28 (LIAA…VVFS) and 41-61 (WGGA…SIVV).

Belongs to the PsbZ family. In terms of assembly, PSII is composed of 1 copy each of membrane proteins PsbA, PsbB, PsbC, PsbD, PsbE, PsbF, PsbH, PsbI, PsbJ, PsbK, PsbL, PsbM, PsbT, PsbX, PsbY, PsbZ, Psb30/Ycf12, peripheral proteins PsbO, CyanoQ (PsbQ), PsbU, PsbV and a large number of cofactors. It forms dimeric complexes.

It is found in the cellular thylakoid membrane. Functionally, may control the interaction of photosystem II (PSII) cores with the light-harvesting antenna, regulates electron flow through the 2 photosystem reaction centers. PSII is a light-driven water plastoquinone oxidoreductase, using light energy to abstract electrons from H(2)O, generating a proton gradient subsequently used for ATP formation. The polypeptide is Photosystem II reaction center protein Z (Acaryochloris marina (strain MBIC 11017)).